The chain runs to 394 residues: Subtilisin-like protease 4 (394 aa).

The first 17 residues, 1 to 17 (CLKTLSVFLAAFAAADA), serve as a signal peptide directing secretion. Positions 18–116 (RAVFKTQGHK…VEQDQVVRIS (99 aa)) are excised as a propeptide. Positions 36-115 (YIVVMKDGVS…YVEQDQVVRI (80 aa)) constitute an Inhibitor I9 domain. The N-linked (GlcNAc...) asparagine glycan is linked to Asn100. A Peptidase S8 domain is found at 126-394 (SWGLGRVSHR…STTNRLLYNG (269 aa)). Catalysis depends on charge relay system residues Asp158 and His189. 2 N-linked (GlcNAc...) asparagine glycosylation sites follow: Asn250 and Asn306. Residue Ser344 is the Charge relay system of the active site.

This sequence belongs to the peptidase S8 family.

It is found in the secreted. In terms of biological role, secreted subtilisin-like serine protease with keratinolytic activity that contributes to pathogenicity. The polypeptide is Subtilisin-like protease 4 (SUB4) (Trichophyton equinum (Horse ringworm fungus)).